Consider the following 294-residue polypeptide: Ribosomal RNA small subunit methyltransferase A (294 aa).

Asn-29, Val-31, Gly-56, Glu-77, Asp-107, and Asn-126 together coordinate S-adenosyl-L-methionine.

It belongs to the class I-like SAM-binding methyltransferase superfamily. rRNA adenine N(6)-methyltransferase family. RsmA subfamily.

The protein localises to the cytoplasm. It catalyses the reaction adenosine(1518)/adenosine(1519) in 16S rRNA + 4 S-adenosyl-L-methionine = N(6)-dimethyladenosine(1518)/N(6)-dimethyladenosine(1519) in 16S rRNA + 4 S-adenosyl-L-homocysteine + 4 H(+). Functionally, specifically dimethylates two adjacent adenosines (A1518 and A1519) in the loop of a conserved hairpin near the 3'-end of 16S rRNA in the 30S particle. May play a critical role in biogenesis of 30S subunits. In Mycobacterium sp. (strain MCS), this protein is Ribosomal RNA small subunit methyltransferase A.